A 386-amino-acid chain; its full sequence is MNIHEYQAKEILSKYNVPIQPGIAILKYEDIDYAIDSLATDTFVIKAQIHAGGRKIGGGIKISNDKNEAKNLAKNMWGMNLVTPQTGPKGQKVQRIYIESAAKIKLELYLGAVIDRSNHCITFMASSEGGINIEEVAHTNPDKIIKVKINILTGIQPFHSRKIIFQLGLTGDLAKQMAKIMSAVYSMLINTDATQVEINPLIITLDDKLIALDAKINFDDSALFRQPLIQEMRDEDEEDQLELRATKADLSYVRMNGNIGCMVNGAGLAMATMDIIKLYGAEPANFLDVGGSADKERVAEALKIISSDQNVKGILINIFGGIMRCDIIAEGVLAAAKEINLSIPLVVRLAGTNFELGKEILSNSKLQIVAANDLDDAARKIVEAVS.

ATP-binding residues include Lys46, Glu99, Ala102, and Glu107. Residues Asn199 and Asp213 each contribute to the Mg(2+) site. Residues Asn264 and 321–323 (GIM) each bind substrate.

Belongs to the succinate/malate CoA ligase beta subunit family. Heterotetramer of two alpha and two beta subunits. Requires Mg(2+) as cofactor.

The catalysed reaction is succinate + ATP + CoA = succinyl-CoA + ADP + phosphate. It carries out the reaction GTP + succinate + CoA = succinyl-CoA + GDP + phosphate. It participates in carbohydrate metabolism; tricarboxylic acid cycle; succinate from succinyl-CoA (ligase route): step 1/1. In terms of biological role, succinyl-CoA synthetase functions in the citric acid cycle (TCA), coupling the hydrolysis of succinyl-CoA to the synthesis of either ATP or GTP and thus represents the only step of substrate-level phosphorylation in the TCA. The beta subunit provides nucleotide specificity of the enzyme and binds the substrate succinate, while the binding sites for coenzyme A and phosphate are found in the alpha subunit. The chain is Succinate--CoA ligase [ADP-forming] subunit beta from Orientia tsutsugamushi (strain Ikeda) (Rickettsia tsutsugamushi).